We begin with the raw amino-acid sequence, 1976 residues long: Myosin-10 (1976 aa).

At R18 the chain carries Omega-N-methylarginine. The region spanning 31 to 81 (TAKKLVWIPSERHGFEAASIKEERGDEVLVELAENGKKAMVNKDDIQKMNP) is the Myosin N-terminal SH3-like domain. A Myosin motor domain is found at 85–783 (SKVEDMAELT…VLAHLEEERD (699 aa)). 178 to 185 (GESGAGKT) contributes to the ATP binding site. The residue at position 442 (K442) is an N6-acetyllysine. The actin-binding stretch occupies residues 661–683 (LTKLMATLRNTNPNFVRCIIPNH). The IQ domain occupies 786–815 (ITDIIIFFQAVCRGYLARKAFAKKQQQLSA). Residues 845-1976 (LQVTRQEEEL…INETQPPQSE (1132 aa)) adopt a coiled-coil conformation. The interval 1126-1149 (DFESEKASRNKAEKQKRDLSEELE) is disordered. Over residues 1129-1149 (SEKASRNKAEKQKRDLSEELE) the composition is skewed to basic and acidic residues. S1145 is modified (phosphoserine). 3 positions are modified to N6-acetyllysine: K1241, K1301, and K1645. Disordered stretches follow at residues 1697–1718 (ASSE…DEIA) and 1874–1976 (KANA…PQSE). Over residues 1698 to 1708 (SSERARRHAEQ) the composition is skewed to basic and acidic residues. At R1930 the chain carries Omega-N-methylarginine. S1935, S1937, S1938, and S1939 each carry phosphoserine. R1940 carries the omega-N-methylarginine modification. A phosphoserine mark is found at S1952 and S1956. T1960 is subject to Phosphothreonine. Residues 1967–1976 (INETQPPQSE) show a composition bias toward polar residues. Position 1975 is a phosphoserine (S1975).

It belongs to the TRAFAC class myosin-kinesin ATPase superfamily. Myosin family. In terms of assembly, myosin is a hexameric protein that consists of 2 heavy chain subunits (MHC), 2 alkali light chain subunits (MLC) and 2 regulatory light chain subunits (MLC-2). Interacts with PLEKHG6. Interacts with ECPAS. Interacts with KIF26B. Interacts with LARP6. Interacts with MCC. Interacts with CFAP95. In terms of processing, phosphorylated by ABL2.

Its subcellular location is the cell projection. It localises to the lamellipodium. In terms of biological role, cellular myosin that appears to play a role in cytokinesis, cell shape, and specialized functions such as secretion and capping. Involved with LARP6 in the stabilization of type I collagen mRNAs for CO1A1 and CO1A2. During cell spreading, plays an important role in cytoskeleton reorganization, focal contacts formation (in the central part but not the margins of spreading cells), and lamellipodial extension; this function is mechanically antagonized by MYH9. In Bos taurus (Bovine), this protein is Myosin-10 (MYH10).